The primary structure comprises 453 residues: Serine/threonine-protein phosphatase 2A regulatory subunit B'' subunit gamma (453 aa).

EF-hand domains follow at residues 273–308 and 341–376; these read PSALRVYGQYLNLDKDHNGMLSKEELSRYGTATMTN and KEPAALQYIFKLLDIENKGYLNVFSLNYFFRAIQEL. Ca(2+)-binding residues include Asp286, Asp288, Asn290, Met292, and Glu297.

As to quaternary structure, interacts with MCM3AP/GANP, PPP5C, and the phosphatase 2A core enzyme composed of the PPP2CA catalytic subunit and the constant regulatory subunit PPP2R1A. Finds in a complex with ABCB1, TFPI2 and PPP2R3C; leading to the dephosphorylation of ABCB1. Expressed in all tissues tested including heart, brain, spleen, thymus, lung, liver, kidney and testis.

It is found in the nucleus. It localises to the cytoplasm. Functionally, may regulate MCM3AP phosphorylation through phosphatase recruitment. May act as a negative regulator of ABCB1 expression and function through the dephosphorylation of ABCB1 by TFPI2/PPP2R3C complex. May play a role in the activation-induced cell death of B-cells. The chain is Serine/threonine-protein phosphatase 2A regulatory subunit B'' subunit gamma (Ppp2r3c) from Mus musculus (Mouse).